The sequence spans 303 residues: Aspartate carbamoyltransferase catalytic subunit (303 aa).

2 residues coordinate carbamoyl phosphate: Arg54 and Thr55. Lys83 is a binding site for L-aspartate. Carbamoyl phosphate is bound by residues Arg104, His132, and Gln135. L-aspartate contacts are provided by Arg164 and Arg226. Positions 265 and 266 each coordinate carbamoyl phosphate.

The protein belongs to the aspartate/ornithine carbamoyltransferase superfamily. ATCase family. In terms of assembly, heterooligomer of catalytic and regulatory chains.

It catalyses the reaction carbamoyl phosphate + L-aspartate = N-carbamoyl-L-aspartate + phosphate + H(+). Its pathway is pyrimidine metabolism; UMP biosynthesis via de novo pathway; (S)-dihydroorotate from bicarbonate: step 2/3. Functionally, catalyzes the condensation of carbamoyl phosphate and aspartate to form carbamoyl aspartate and inorganic phosphate, the committed step in the de novo pyrimidine nucleotide biosynthesis pathway. The polypeptide is Aspartate carbamoyltransferase catalytic subunit (Methanocorpusculum labreanum (strain ATCC 43576 / DSM 4855 / Z)).